The following is a 348-amino-acid chain: S-adenosylmethionine:tRNA ribosyltransferase-isomerase (348 aa).

The protein belongs to the QueA family. Monomer.

Its subcellular location is the cytoplasm. It carries out the reaction 7-aminomethyl-7-carbaguanosine(34) in tRNA + S-adenosyl-L-methionine = epoxyqueuosine(34) in tRNA + adenine + L-methionine + 2 H(+). Its pathway is tRNA modification; tRNA-queuosine biosynthesis. Its function is as follows. Transfers and isomerizes the ribose moiety from AdoMet to the 7-aminomethyl group of 7-deazaguanine (preQ1-tRNA) to give epoxyqueuosine (oQ-tRNA). The sequence is that of S-adenosylmethionine:tRNA ribosyltransferase-isomerase from Cytophaga hutchinsonii (strain ATCC 33406 / DSM 1761 / CIP 103989 / NBRC 15051 / NCIMB 9469 / D465).